The sequence spans 165 residues: Crossover junction endodeoxyribonuclease RuvC (165 aa).

Residues D7, E67, and D140 contribute to the active site. Mg(2+) is bound by residues D7, E67, and D140.

The protein belongs to the RuvC family. In terms of assembly, homodimer which binds Holliday junction (HJ) DNA. The HJ becomes 2-fold symmetrical on binding to RuvC with unstacked arms; it has a different conformation from HJ DNA in complex with RuvA. In the full resolvosome a probable DNA-RuvA(4)-RuvB(12)-RuvC(2) complex forms which resolves the HJ. It depends on Mg(2+) as a cofactor.

It localises to the cytoplasm. It catalyses the reaction Endonucleolytic cleavage at a junction such as a reciprocal single-stranded crossover between two homologous DNA duplexes (Holliday junction).. Its function is as follows. The RuvA-RuvB-RuvC complex processes Holliday junction (HJ) DNA during genetic recombination and DNA repair. Endonuclease that resolves HJ intermediates. Cleaves cruciform DNA by making single-stranded nicks across the HJ at symmetrical positions within the homologous arms, yielding a 5'-phosphate and a 3'-hydroxyl group; requires a central core of homology in the junction. The consensus cleavage sequence is 5'-(A/T)TT(C/G)-3'. Cleavage occurs on the 3'-side of the TT dinucleotide at the point of strand exchange. HJ branch migration catalyzed by RuvA-RuvB allows RuvC to scan DNA until it finds its consensus sequence, where it cleaves and resolves the cruciform DNA. The polypeptide is Crossover junction endodeoxyribonuclease RuvC (Halothermothrix orenii (strain H 168 / OCM 544 / DSM 9562)).